We begin with the raw amino-acid sequence, 911 residues long: Facilitated trehalose transporter Tret1 (911 aa).

The tract at residues 1–256 (MSGRDNRGAG…RIGFQQQKAT (256 aa)) is disordered. The Cytoplasmic segment spans residues 1-446 (MSGRDNRGAG…VYRPTTNPIY (446 aa)). A compositionally biased stretch (gly residues) spans 8-19 (GAGGGGGGGGGG). The segment covering 32–50 (KLKEKLTRAGEELGYHRVE) has biased composition (basic and acidic residues). Low complexity-rich tracts occupy residues 51–64 (SNLS…SLDT), 76–129 (AAPQ…QQLR), and 156–166 (QQIHVQQQQQQ). Phosphoserine is present on residues serine 302, serine 303, and serine 304. Positions 334 to 355 (VLQGSSTDSDEEGDDAEHKRLI) are disordered. Phosphoserine is present on residues serine 374 and serine 376. A disordered region spans residues 380–402 (FLTSRQNFQQQRSISTDSRKSRR). A compositionally biased stretch (polar residues) spans 384-395 (RQNFQQQRSIST). The chain crosses the membrane as a helical span at residues 447-467 (IWTQVLAALSVSLGSLVVGFA). Topologically, residues 468 to 494 (SAYTSPALVSMTNTNLTSFVVTPQAAS) are extracellular. N-linked (GlcNAc...) asparagine glycosylation is present at asparagine 482. A helical transmembrane segment spans residues 495–515 (WVGGIMPLAGLAGGIAGGPFI). The Cytoplasmic segment spans residues 516-527 (EYLGRRNTILAT). Residues 528 to 548 (AVPFIVSWLLIACAVNVIMVL) form a helical membrane-spanning segment. The Extracellular segment spans residues 549 to 551 (CGR). Residues 552-572 (FLAGFCVGIASLSLPVYLGET) traverse the membrane as a helical segment. Residues 573–578 (VQPEVR) are Cytoplasmic-facing. Residues 579 to 599 (GTLGLLPTAFGNIGILLCFVA) traverse the membrane as a helical segment. The Extracellular segment spans residues 600 to 606 (GTYMDWS). A helical membrane pass occupies residues 607–627 (MLAFLGASLPVPFLILMFLIP). The Cytoplasmic segment spans residues 628 to 690 (ETPRWYVSRG…ELLKRSNLKP (63 aa)). The helical transmembrane segment at 691-711 (LSISLGLMFFQQLSGINAVIF) threads the bilayer. The Extracellular segment spans residues 712–727 (YTVQIFQDAGSTIDGN). The chain crosses the membrane as a helical span at residues 728 to 748 (VCTIIVGVVNFAATFIATILI). Over 749–754 (DRAGRK) the chain is Cytoplasmic. Residues 755-775 (VLLYVSNVMMVLTLFVLGGFF) traverse the membrane as a helical segment. The Extracellular portion of the chain corresponds to 776-794 (YCKSSGMDTSNVGWLPLSC). The helical transmembrane segment at 795-815 (FVIYILGFSLGFGPIPWLMMG) threads the bilayer. Residues 816–821 (EILPAK) lie on the Cytoplasmic side of the membrane. The chain crosses the membrane as a helical span at residues 822 to 842 (IRGSAASVATAFNWSCTFVVT). Residues 843-855 (KSFQDMIDFMGAH) are Extracellular-facing. Residues 856–876 (GAFWMFGAICFIGLFFVIFYV) form a helical membrane-spanning segment. Over 877 to 911 (PETQGKTLEDIERKMMGRVRRMSSVANIKPLSFNM) the chain is Cytoplasmic. 2 positions are modified to phosphoserine: serine 899 and serine 900.

The protein belongs to the major facilitator superfamily. Sugar transporter (TC 2.A.1.1) family. Trehalose transporter subfamily.

Its subcellular location is the cell membrane. Its function is as follows. Low-capacity facilitative transporter for trehalose. Does not transport maltose, sucrose or lactose. Mediates the bidirectional transfer of trehalose. Responsible for the transport of trehalose synthesized in the fat body and the incorporation of trehalose into other tissues that require a carbon source, thereby regulating trehalose levels in the hemolymph. In Drosophila virilis (Fruit fly), this protein is Facilitated trehalose transporter Tret1.